A 449-amino-acid polypeptide reads, in one-letter code: Na(+)/H(+) antiporter NhaA 1 (449 aa).

11 helical membrane-spanning segments follow: residues 32–52 (IEATSGAVLLLATVVALTLSN), 87–107 (GLMTLFFFIVALEIKREVVLG), 114–134 (MVAFSVVAAAGGMLVPMGLYL), 145–165 (GWGVVMPTDTAFVIGCLALLG), 174–194 (VFLLSLAVVDDLAAILVVAVG), 202–222 (TALALGAVGLVIIRGMALLGV), 233–253 (AIIWLAVNASGIHATIVGVIL), 318–338 (WVAFGVMPLFALANAGVSITI), 347–367 (LAVMAGFVLGKPIGVTAFAWL), 382–402 (WGGLVGGALLTGIGFTMALFI), and 417–437 (LGILAASVVSSVAGLTLLCMF).

This sequence belongs to the NhaA Na(+)/H(+) (TC 2.A.33) antiporter family.

The protein localises to the cell inner membrane. The enzyme catalyses Na(+)(in) + 2 H(+)(out) = Na(+)(out) + 2 H(+)(in). In terms of biological role, na(+)/H(+) antiporter that extrudes sodium in exchange for external protons. In Acidiphilium cryptum (strain JF-5), this protein is Na(+)/H(+) antiporter NhaA 1.